A 228-amino-acid chain; its full sequence is Isoprenyl transferase (228 aa).

The active site involves D15. Mg(2+) is bound at residue D15. Substrate contacts are provided by residues G16–R19, W20, R28, H32, and S60–E62. N63 (proton acceptor) is an active-site residue. Substrate contacts are provided by residues W64, R66, R176, and R182–S184. E195 is a Mg(2+) binding site.

It belongs to the UPP synthase family. As to quaternary structure, homodimer. Mg(2+) is required as a cofactor.

Functionally, catalyzes the condensation of isopentenyl diphosphate (IPP) with allylic pyrophosphates generating different type of terpenoids. This Wolinella succinogenes (strain ATCC 29543 / DSM 1740 / CCUG 13145 / JCM 31913 / LMG 7466 / NCTC 11488 / FDC 602W) (Vibrio succinogenes) protein is Isoprenyl transferase.